Consider the following 570-residue polypeptide: Sulfite reductase [NADPH] hemoprotein beta-component (570 aa).

The [4Fe-4S] cluster site is built by Cys434, Cys440, Cys479, and Cys483. Cys483 is a siroheme binding site.

The protein belongs to the nitrite and sulfite reductase 4Fe-4S domain family. Alpha(8)-beta(8). The alpha component is a flavoprotein, the beta component is a hemoprotein. It depends on siroheme as a cofactor. The cofactor is [4Fe-4S] cluster.

It carries out the reaction hydrogen sulfide + 3 NADP(+) + 3 H2O = sulfite + 3 NADPH + 4 H(+). It participates in sulfur metabolism; hydrogen sulfide biosynthesis; hydrogen sulfide from sulfite (NADPH route): step 1/1. In terms of biological role, component of the sulfite reductase complex that catalyzes the 6-electron reduction of sulfite to sulfide. This is one of several activities required for the biosynthesis of L-cysteine from sulfate. The chain is Sulfite reductase [NADPH] hemoprotein beta-component from Salmonella gallinarum (strain 287/91 / NCTC 13346).